Here is a 340-residue protein sequence, read N- to C-terminus: MRVYYDRDCDINLIKDKKVAILGYGSQGHAHALNLRDSGAKNVVVALREGSPSAKKAEAEGLKVMGIAEAAAWCDLIMFTMPDELQAETYKKYVHDNLREGSAIAFAHGLNVHFGLIEPKPGVDVIMMAPKGPGHTVRGEYVKGGGVPCLVAVHNDATGKAMEIGLSYCSAIGGGRSGIIETNFRQECETDLFGEQAVLCGGLVELIRMGFETLVEAGYEPEMAYFECLHEVKLIVDLIYEGGIANMNYSISNTAEYGEYVSGPRILPYEETKARMKAVLTDIQTGKFVRDFMQENAVGQPFFKATRRINDEHQIEQVGEKLRGMMPWISKGKMVDRARN.

One can recognise a KARI N-terminal Rossmann domain in the interval 1-182 (MRVYYDRDCD…GGGRSGIIET (182 aa)). NADP(+) contacts are provided by residues 24-27 (YGSQ), R48, S51, S53, and 83-86 (DELQ). H108 is an active-site residue. An NADP(+)-binding site is contributed by G134. The KARI C-terminal knotted domain maps to 183–329 (NFRQECETDL…EKLRGMMPWI (147 aa)). Mg(2+) is bound by residues D191, E195, E227, and E231. Position 252 (S252) interacts with substrate.

The protein belongs to the ketol-acid reductoisomerase family. The cofactor is Mg(2+).

The enzyme catalyses (2R)-2,3-dihydroxy-3-methylbutanoate + NADP(+) = (2S)-2-acetolactate + NADPH + H(+). The catalysed reaction is (2R,3R)-2,3-dihydroxy-3-methylpentanoate + NADP(+) = (S)-2-ethyl-2-hydroxy-3-oxobutanoate + NADPH + H(+). It participates in amino-acid biosynthesis; L-isoleucine biosynthesis; L-isoleucine from 2-oxobutanoate: step 2/4. The protein operates within amino-acid biosynthesis; L-valine biosynthesis; L-valine from pyruvate: step 2/4. In terms of biological role, involved in the biosynthesis of branched-chain amino acids (BCAA). Catalyzes an alkyl-migration followed by a ketol-acid reduction of (S)-2-acetolactate (S2AL) to yield (R)-2,3-dihydroxy-isovalerate. In the isomerase reaction, S2AL is rearranged via a Mg-dependent methyl migration to produce 3-hydroxy-3-methyl-2-ketobutyrate (HMKB). In the reductase reaction, this 2-ketoacid undergoes a metal-dependent reduction by NADPH to yield (R)-2,3-dihydroxy-isovalerate. This Cereibacter sphaeroides (strain ATCC 17029 / ATH 2.4.9) (Rhodobacter sphaeroides) protein is Ketol-acid reductoisomerase (NADP(+)).